A 216-amino-acid polypeptide reads, in one-letter code: Adenylate kinase (216 aa).

10-15 contacts ATP; that stretch reads GAGKGT. Residues 30–59 form an NMP region; the sequence is STGDMIRETIKSDSEIGKELKKVLDAGQLV. Residues threonine 31, arginine 36, 57–59, and glutamine 92 each bind AMP; that span reads QLV. An LID region spans residues 122–159; it reads GRRVHPASGRTYHTKFNPPKVEGKDDITGEDLITRTDD. Residues arginine 123 and 132–133 contribute to the ATP site; that span reads TY. AMP is bound by residues arginine 156 and arginine 167. Residue glutamine 202 participates in ATP binding.

Belongs to the adenylate kinase family. In terms of assembly, monomer.

The protein resides in the cytoplasm. It carries out the reaction AMP + ATP = 2 ADP. Its pathway is purine metabolism; AMP biosynthesis via salvage pathway; AMP from ADP: step 1/1. Functionally, catalyzes the reversible transfer of the terminal phosphate group between ATP and AMP. Plays an important role in cellular energy homeostasis and in adenine nucleotide metabolism. In Francisella philomiragia subsp. philomiragia (strain ATCC 25017 / CCUG 19701 / FSC 153 / O#319-036), this protein is Adenylate kinase.